A 999-amino-acid chain; its full sequence is Embryonic polarity protein dorsal (999 aa).

The disordered stretch occupies residues 1–44; the sequence is MFPNQNNGAAPGQGPAVDGQQSLNYNGLPAQQQQQLAQSTKNVR. The RHD domain occupies 47-342; sequence PYVKITEQPA…TFWNLHRHLK (296 aa). Ser-312 is subject to Phosphoserine; by PKA. 2 disordered regions span residues 389-424 and 670-851; these read FNHEESQQSEPALEQEQSVQQEQYTQEQSLQQEQYT and QARK…SVSG. Positions 402–424 are enriched in low complexity; it reads EQEQSVQQEQYTQEQSLQQEQYT. The Nuclear export signal signature appears at 668–677; sequence NSQARKPETP. Over residues 677-686 the composition is skewed to pro residues; it reads PMRPVPPVPP. A compositionally biased stretch (basic and acidic residues) spans 710–719; that stretch reads KQDSNAENRS. The span at 720–734 shows a compositional bias: polar residues; that stretch reads IEANTVQTKPSTGES. The Nuclear localization signal motif lies at 756 to 773; sequence KKPGFFSKLFSRRKSKPD. 2 stretches are compositionally biased toward low complexity: residues 819-829 and 836-851; these read SNPAPAKSSPV and SKLTKPVGRSVSSVSG.

In terms of assembly, interacts with tamo via the nuclear localization signal. Interacts with emb, a component of the nuclear export complex. In terms of tissue distribution, in unchallenged larvae, expression of both isoforms is seen in fat body and gut (isoform A is more abundant). After immune challenge levels of both isoforms are enhanced.

It localises to the cytoplasm. It is found in the nucleus. Embryonic developmental transcription factor. The lateral or ventral identity of a cell depends upon the concentration of this protein in its nucleus during the blastoderm stage. Acts as a morphogenetic transcription factor that specifically binds to the kappa-B-related consensus sequence 5'-GRGAAAANCC-3', located in the enhancer region of zygotic genes such as Zen, Twist, Snail and Decapentaplegic, promoting their expression. Part of a signaling pathway involving NF-kappa-B and Toll-related receptors, that functions in the apoptosis of unfit cells during cell competition. Mediates an immune response in larvae. May be part of a NF-kappa-B and Tollo signaling cascade that regulates development of the peripheral nervous system. This Drosophila melanogaster (Fruit fly) protein is Embryonic polarity protein dorsal (dl).